Here is a 423-residue protein sequence, read N- to C-terminus: Glucose-1-phosphate adenylyltransferase (423 aa).

Alpha-D-glucose 1-phosphate-binding positions include Y98, G163, 178–179 (EK), and S189.

This sequence belongs to the bacterial/plant glucose-1-phosphate adenylyltransferase family. Homotetramer.

The enzyme catalyses alpha-D-glucose 1-phosphate + ATP + H(+) = ADP-alpha-D-glucose + diphosphate. It functions in the pathway glycan biosynthesis; glycogen biosynthesis. Its function is as follows. Involved in the biosynthesis of ADP-glucose, a building block required for the elongation reactions to produce glycogen. Catalyzes the reaction between ATP and alpha-D-glucose 1-phosphate (G1P) to produce pyrophosphate and ADP-Glc. This is Glucose-1-phosphate adenylyltransferase from Thermotoga neapolitana (strain ATCC 49049 / DSM 4359 / NBRC 107923 / NS-E).